A 117-amino-acid polypeptide reads, in one-letter code: Cuticle protein CP1243 (117 aa).

4 tandem repeats follow at residues 1–17, 26–43, 67–84, and 93–110.

In terms of tissue distribution, calcified shell.

In Cancer pagurus (Rock crab), this protein is Cuticle protein CP1243.